We begin with the raw amino-acid sequence, 833 residues long: DNA ligase (833 aa).

NAD(+)-binding positions include 35-39 (DADYD), 84-85 (SL), and Glu115. The active-site N6-AMP-lysine intermediate is the Lys117. NAD(+) is bound by residues Arg138, Glu175, Lys292, and Lys316. 4 residues coordinate Zn(2+): Cys410, Cys413, Cys428, and Cys434. Residues 750-833 (EKTGPLDGQT…AFLGDHGQQP (84 aa)) form the BRCT domain.

This sequence belongs to the NAD-dependent DNA ligase family. LigA subfamily. Mg(2+) is required as a cofactor. Mn(2+) serves as cofactor.

The enzyme catalyses NAD(+) + (deoxyribonucleotide)n-3'-hydroxyl + 5'-phospho-(deoxyribonucleotide)m = (deoxyribonucleotide)n+m + AMP + beta-nicotinamide D-nucleotide.. Its function is as follows. DNA ligase that catalyzes the formation of phosphodiester linkages between 5'-phosphoryl and 3'-hydroxyl groups in double-stranded DNA using NAD as a coenzyme and as the energy source for the reaction. It is essential for DNA replication and repair of damaged DNA. The polypeptide is DNA ligase (Xanthomonas axonopodis pv. citri (strain 306)).